The following is a 577-amino-acid chain: F-box-like/WD repeat-containing protein TBL1X (577 aa).

Residues 55–87 enclose the LisH domain; that stretch reads TSDEVNFLVYRYLQESGFSHSAFTFGIESHISQ. Residues 92–137 enclose the F-box-like domain; sequence GTLVPPAALISILQKGLQYVEAEISINEDGTVFDGRPIESLSLIDA. At lysine 153 the chain carries N6-acetyllysine. A disordered region spans residues 177–202; that stretch reads TTSAGVSHQNPSKNREATVNGEENRA. Serine 183 is modified (phosphoserine). 8 WD repeats span residues 230 to 269, 286 to 325, 327 to 366, 369 to 409, 410 to 449, 452 to 500, 503 to 542, and 544 to 576; these read GHESEVFICAWNPVSDLLASGSGDSTARIWNLNENSNGGS, PSNKDVTSLDWNTNGTLLATGSYDGFARIWTEDGNLASTL, QHKGPIFALKWNRKGNYILSAGVDKTTIIWDAHTGEAKQQ, FHSA…KTFQ, GHTNEVNAIKWDPSGMLLASCSDDMTLKIWSMKQEVCIHD, AHNK…CTHT, KHQEPVYSVAFSPDGKYLASGSFDKCVHIWNTQSGNLVHS, and RGTGGIFEVCWNARGDKVGASASDGSVCVLDLR. Lysine 340 participates in a covalent cross-link: Glycyl lysine isopeptide (Lys-Gly) (interchain with G-Cter in SUMO2).

Belongs to the WD repeat EBI family. In terms of assembly, homotetramer; dimer of dimers. Component of the N-Cor repressor complex, at least composed of NCOR1, NCOR2, HDAC3, TBL1X, TBL1R, CORO2A and GPS2. Interacts with GPS2 (when sumoylated); leading to protect GPS2 against degradation by the proteasome. Component of a E3 ubiquitin ligase complex containing UBE2D1, SIAH1, CACYBP/SIP, SKP1, APC and TBL1X. Probably part of other corepressor complexes, that do not contain NCOR1 and NCOR2. Interacts with histones H2B, H3a and H4. Interacts with MECP2; recruits TBL1X to the heterochromatin foci. Interacts with USP44. As to expression, ubiquitous.

It localises to the nucleus. Functionally, F-box-like protein involved in the recruitment of the ubiquitin/19S proteasome complex to nuclear receptor-regulated transcription units. Plays an essential role in transcription activation mediated by nuclear receptors. Probably acts as integral component of corepressor complexes that mediates the recruitment of the 19S proteasome complex, leading to the subsequent proteasomal degradation of transcription repressor complexes, thereby allowing cofactor exchange. The protein is F-box-like/WD repeat-containing protein TBL1X (TBL1X) of Homo sapiens (Human).